The primary structure comprises 421 residues: Serine protease HTRA2, mitochondrial (421 aa).

A helical membrane pass occupies residues 63 to 81 (VIRFFVPFSLGALASTMVA). Residues 74–77 (ALAS) carry the IAP-binding motif. Residues 138 to 301 (SNGSGFVIEQ…IPIDYVKVFL (164 aa)) form a serine protease region. Residues H156, D188, and S265 each act as charge relay system in the active site. Residues 324–409 (MGITMLTLTP…ELDIVILRGV (86 aa)) form the PDZ domain.

Belongs to the peptidase S1C family. In terms of assembly, interacts with th/DIAP1 (via BIR 2 domain).

It is found in the mitochondrion intermembrane space. The protein localises to the mitochondrion membrane. The catalysed reaction is Cleavage of non-polar aliphatic amino-acids at the P1 position, with a preference for Val, Ile and Met. At the P2 and P3 positions, Arg is selected most strongly with a secondary preference for other hydrophilic residues.. Serine protease that shows proteolytic activity against a non-specific substrate beta-casein. Promotes or induces cell death either by direct binding to and inhibition of BIRC proteins (also called inhibitor of apoptosis proteins, IAPs), leading to an increase in caspase activity, or by a BIRC inhibition-independent, caspase-independent and serine protease activity-dependent mechanism. Can antagonize antiapoptotic activity of th/Diap1 by directly inducing the degradation of th/Diap1. The polypeptide is Serine protease HTRA2, mitochondrial (Drosophila virilis (Fruit fly)).